Here is a 264-residue protein sequence, read N- to C-terminus: Pimeloyl-[acyl-carrier protein] methyl ester esterase (264 aa).

The region spanning 23-244 (LVMLHGWGVN…MLAKASHAPF (222 aa)) is the AB hydrolase-1 domain. Substrate is bound by residues W29, 87-88 (SL), and 150-154 (FLAIQ). S87 acts as the Nucleophile in catalysis. Catalysis depends on residues D214 and H241. Residue H241 participates in substrate binding.

It belongs to the AB hydrolase superfamily. Carboxylesterase BioH family. In terms of assembly, monomer.

The protein resides in the cytoplasm. The enzyme catalyses 6-carboxyhexanoyl-[ACP] methyl ester + H2O = 6-carboxyhexanoyl-[ACP] + methanol + H(+). It participates in cofactor biosynthesis; biotin biosynthesis. The physiological role of BioH is to remove the methyl group introduced by BioC when the pimeloyl moiety is complete. It allows to synthesize pimeloyl-ACP via the fatty acid synthetic pathway through the hydrolysis of the ester bonds of pimeloyl-ACP esters. The chain is Pimeloyl-[acyl-carrier protein] methyl ester esterase from Shewanella sp. (strain MR-7).